Here is a 164-residue protein sequence, read N- to C-terminus: FMN reductase (NADH) RutF (164 aa).

The protein belongs to the non-flavoprotein flavin reductase family. RutF subfamily.

The catalysed reaction is FMNH2 + NAD(+) = FMN + NADH + 2 H(+). Its function is as follows. Catalyzes the reduction of FMN to FMNH2 which is used to reduce pyrimidine by RutA via the Rut pathway. The protein is FMN reductase (NADH) RutF of Klebsiella pneumoniae (strain 342).